Reading from the N-terminus, the 1025-residue chain is MPSNARAGNLKDPEVAELFFKDDPEKLFADLREIGHGSFGAVYFARDIRNNEVVAIKKMSYSGKQSNEKWQDIIKEVKFLQKLRHPNTIEYKGCYLREHTAWLVMEYCLGSASDLLEVHKKPLQEMEIAAITHGALQGLAYLHNHNMIHRDVKAGNILLTEPGLVKLGDFGSASIMAPANSFVGTPYWMAPEVILAMDEGQYDGKVDVWSLGITSIELAERKPPLFNMNAMSALYHIAQNESPVLQSNHWSEYFRNFVDSCLQKIPQDRPTSDMLLKHRFLQRERPQTVIMELIQRTKDAVRELDNLQYRKMKKILFQDTQNGPNTETTEEEEEAEQFLHCTGTITSMESSQSVPSMSISASSQSSSVNSLADASDDSGEMAMMQEGEHTVTSNSSVIHRLPAHDNIYDDPYQPEMEAQQSSSAARRRAYCRNRDHFATIRTASLVTRQIQEHEQDSALREQMSGYKRMRRQHQKQLMALENKLKSELDEHQQRLDKELEAHRSNFSAENEKISKKHQAIFEKEAKGGMTEEKKFQQHILGQQKKELTNLLESQKRQYKIRKEQLKEELQENQSTPKREKQEWLLRQKESMQHYQAEEEANLLRRQRQYFELQCRQYKRKMLLARHNLDQDLLREELNKKQTQRDLECAMLLRQHECTQELEFRHLQLLQHTRSELIRMQHQTELGNQLEYNKRREQELRQKHAAEVRQQPKSLKSKELQIKRQFQDTCKIQTRQYKALRNHLLETTPKSEHKSILKRLKDEQTRKLAILAEQYDHSINEMLSTQALRLDETQEAEYQELRIQLQKELELLNAYQSKIKIHTDAQHERELKELEQRVSIRRALLEQRIEEEMLALQTERSERIRSLLERQAREIEAFDSESMRLGFSNMALTGIPAEAFNQGYQAPPPGWPSRPVPRSGSHWSHGVQNTGAPQLWRQPTLLAPPSASWGLHPPGSSSSLSALPSSSSSSSSSPSSSSGGRPGLLLLRNSPQPLRRGGSGGPSEAGLSRSTSVTSQLSNGSHLSYS.

The region spanning 28–281 (FADLREIGHG…SDMLLKHRFL (254 aa)) is the Protein kinase domain. Residues 34–42 (IGHGSFGAV) and lysine 57 each bind ATP. Residue aspartate 151 is the Proton acceptor of the active site. The segment covering 349–373 (ESSQSVPSMSISASSQSSSVNSLAD) has biased composition (low complexity). Residues 349–377 (ESSQSVPSMSISASSQSSSVNSLADASDD) form a disordered region. Coiled coils occupy residues 457–650 (SALR…ECAM) and 755–876 (ILKR…EIEA). Disordered regions lie at residues 899 to 930 (FNQGYQAPPPGWPSRPVPRSGSHWSHGVQNTG) and 945 to 1025 (SASW…LSYS). The span at 905–914 (APPPGWPSRP) shows a compositional bias: pro residues. Residues 947–986 (SWGLHPPGSSSSLSALPSSSSSSSSSPSSSSGGRPGLLLL) show a composition bias toward low complexity. Residues 1007–1025 (SRSTSVTSQLSNGSHLSYS) show a composition bias toward polar residues.

The protein belongs to the protein kinase superfamily. STE Ser/Thr protein kinase family. STE20 subfamily. The cofactor is Mg(2+).

The catalysed reaction is L-seryl-[protein] + ATP = O-phospho-L-seryl-[protein] + ADP + H(+). The enzyme catalyses L-threonyl-[protein] + ATP = O-phospho-L-threonyl-[protein] + ADP + H(+). In terms of biological role, serine/threonine-protein kinase involved in different processes such as apoptotic morphological changes, MAPK8/JNK and MAPK14/p38 MAPK signaling pathway. Its function is as follows. Activates the JNK MAP kinase pathway. The sequence is that of Serine/threonine-protein kinase TAO2 (taok2) from Xenopus laevis (African clawed frog).